Reading from the N-terminus, the 467-residue chain is Matrix metalloproteinase-18 (467 aa).

An N-terminal signal peptide occupies residues 1–17; it reads MNSLLLKLLLCVAITAA. A propeptide spanning residues 18–99 is cleaved from the precursor; sequence FPADKQDEPP…PRCGVYDVGQ (82 aa). A Cysteine switch motif is present at residues 90–97; it reads PRCGVYDV. Residues cysteine 92 and histidine 218 each contribute to the Zn(2+) site. Glutamate 219 is a catalytic residue. Zn(2+) contacts are provided by histidine 222 and histidine 228. 4 Hemopexin repeats span residues 277–326, 327–373, 375–423, and 424–467; these read PSRC…WPSL, PTNI…GFPK, VKRI…FPGI, and PDKI…WLGC. A disulfide bridge connects residues cysteine 280 and cysteine 467.

It belongs to the peptidase M10A family. The cofactor is Zn(2+). Ca(2+) serves as cofactor. In terms of tissue distribution, expressed only transiently in whole animal, at time when tadpole feeding begins.

The protein localises to the secreted. It localises to the extracellular space. It is found in the extracellular matrix. With respect to regulation, up-regulated in the tail by thyroid hormone. Its function is as follows. Cleaves collagen type I. May play a role in larval tissue degeneration and adult organogenesis during amphibian metamorphosis. May be involved in tail resorption. This is Matrix metalloproteinase-18 (mmp18) from Xenopus laevis (African clawed frog).